Reading from the N-terminus, the 156-residue chain is CRIB domain-containing protein RIC11 (156 aa).

The 14-residue stretch at Ile26–Gly39 folds into the CRIB domain. A disordered region spans residues Gln87–Ala156. Residues Ile109–Pro120 show a composition bias toward basic residues. Residues Ser121–Lys142 show a composition bias toward low complexity.

Functionally, functions as a downstream effector of Rho-related GTP binding proteins of the 'Rho of Plants' (ROPs) family. Participates in the propagation of ROP GTPase signals in specific cellular responses. This is CRIB domain-containing protein RIC11 (RIC11) from Arabidopsis thaliana (Mouse-ear cress).